We begin with the raw amino-acid sequence, 429 residues long: MAKDILKNQDPKLQAMIVEHSAPAPKEIPMDAPVLKRVARPLRHVKFIPIKSLIFHTKTGPMDFSYEKKIKTPIPKNKIVVRVSNVGLNPVDMKIRNGYTSSIYGEIGLGREYSGVITEVGENLNYAWHVGDEVYGIYYHPHLAVGCLQSSILVDPKVDPILLRPESVSAEEAAGSLFCLATGYNILNKLSKNKYLKQDSNVLINGGTSSVGMFVIQLLKRHYKLQKKLVIVTSANGPQVLQEKFPDLADEMIFIDYLTCRGKSSKPLRKMLEEKKISQYDPVEDKETILNYNEGKFDVVLDFVGGYDILSHSSSLIHGGGAYVTTVGDYVANYKEDIFDSWDNPSANARKMFGSIIWSYNYTHYYFDPNAKTASANNDWIEQCGDFLKNGTVKCVVDKVYDWKDHKEAFSYMATQRAQGKLIMNVEKF.

As to quaternary structure, interacts with PMA1.

The protein localises to the cell membrane. It localises to the membrane raft. It is found in the golgi apparatus membrane. The protein resides in the late endosome membrane. Functionally, lipid raft-associated protein involved in the targeting of PMA1 from Golgi to the plasma membrane. May induce clustering of PMA1, which facilitates partition of PMA1 into lipid rafts after leaving the ER and its transport to the cell surface. In Saccharomyces cerevisiae (strain ATCC 204508 / S288c) (Baker's yeast), this protein is Protein AST1.